We begin with the raw amino-acid sequence, 130 residues long: uncharacterized protein (130 aa).

This is an uncharacterized protein from Citrus leprosis virus C (isolate Citrus sinesis/Brazil/Cordeiropolis/2003) (CiLV-C).